Reading from the N-terminus, the 518-residue chain is Glutamate--cysteine ligase (518 aa).

This sequence belongs to the glutamate--cysteine ligase type 1 family. Type 1 subfamily.

It carries out the reaction L-cysteine + L-glutamate + ATP = gamma-L-glutamyl-L-cysteine + ADP + phosphate + H(+). The protein operates within sulfur metabolism; glutathione biosynthesis; glutathione from L-cysteine and L-glutamate: step 1/2. The protein is Glutamate--cysteine ligase (gshA) of Buchnera aphidicola subsp. Acyrthosiphon pisum (strain APS) (Acyrthosiphon pisum symbiotic bacterium).